The sequence spans 332 residues: Ribosomal RNA small subunit methyltransferase C (332 aa).

This sequence belongs to the methyltransferase superfamily. RsmC family. In terms of assembly, monomer.

The protein resides in the cytoplasm. The enzyme catalyses guanosine(1207) in 16S rRNA + S-adenosyl-L-methionine = N(2)-methylguanosine(1207) in 16S rRNA + S-adenosyl-L-homocysteine + H(+). In terms of biological role, specifically methylates the guanine in position 1207 of 16S rRNA in the 30S particle. This chain is Ribosomal RNA small subunit methyltransferase C, found in Pseudomonas paraeruginosa (strain DSM 24068 / PA7) (Pseudomonas aeruginosa (strain PA7)).